The chain runs to 229 residues: Lipoprotein-releasing system ATP-binding protein LolD (229 aa).

The ABC transporter domain maps to 7-229; the sequence is LKCKNVTKTY…KNGKLYKKNL (223 aa). 43–50 contributes to the ATP binding site; that stretch reads GDSGSGKS.

It belongs to the ABC transporter superfamily. Lipoprotein translocase (TC 3.A.1.125) family. As to quaternary structure, the complex is composed of two ATP-binding proteins (LolD) and two transmembrane proteins (LolC and LolE).

The protein localises to the cell membrane. Functionally, part of the ABC transporter complex LolCDE involved in the translocation of lipoproteins, in an ATP-dependent manner. The polypeptide is Lipoprotein-releasing system ATP-binding protein LolD (Wigglesworthia glossinidia brevipalpis).